The following is a 357-amino-acid chain: O-methyltransferase 1, chloroplastic (357 aa).

A chloroplast-targeting transit peptide spans 1-53; that stretch reads MPVLPWLAAAATTPVRRSPPLPATPRALLRLPASSFPPWSNCAKSGLPPRGPF. Residues 50 to 71 are disordered; the sequence is RGPFATAADTPLGGSLPEPEEE.

This sequence belongs to the methyltransferase superfamily. LCMT family. Expressed in roots, leaf sheaths, flag leaves and panicles.

Its subcellular location is the plastid. It localises to the chloroplast. It carries out the reaction N-acetylserotonin + S-adenosyl-L-methionine = melatonin + S-adenosyl-L-homocysteine + H(+). It participates in aromatic compound metabolism; melatonin biosynthesis; melatonin from serotonin: step 1/2. In terms of biological role, involved in melatonin biosynthesis. Can function as acetylserotonin O-methyltransferase. Catalyzes the transfer of a methyl group onto N-acetylserotonin, producing melatonin (N-acetyl-5-methoxytryptamine). Involved in the regulation of jasmonate- and brassinosteroid-mediated plant growth and defense responses. This Oryza sativa subsp. japonica (Rice) protein is O-methyltransferase 1, chloroplastic.